The sequence spans 139 residues: Trafficking protein particle complex subunit 2-like protein (139 aa).

It belongs to the TRAPP small subunits family. Sedlin subfamily.

Its subcellular location is the cytoplasm. It is found in the perinuclear region. The protein localises to the endoplasmic reticulum. It localises to the golgi apparatus. Functionally, may play a role in vesicular transport from endoplasmic reticulum to Golgi. This Taeniopygia guttata (Zebra finch) protein is Trafficking protein particle complex subunit 2-like protein (TRAPPC2L).